Here is a 481-residue protein sequence, read N- to C-terminus: UDP-N-acetylmuramoyl-L-alanyl-D-glutamate--L-lysine ligase (481 aa).

Position 42 (S42) interacts with UDP-N-acetyl-alpha-D-muramoyl-L-alanyl-D-glutamate. 118 to 124 provides a ligand contact to ATP; that stretch reads GTKGKTT. UDP-N-acetyl-alpha-D-muramoyl-L-alanyl-D-glutamate is bound by residues Q158, 160-161, S187, and R195; that span reads TT. K229 is modified (N6-carboxylysine). The L-lysine recognition motif signature appears at 404–407; it reads DDPN.

This sequence belongs to the MurCDEF family. MurE subfamily. Carboxylation is probably crucial for Mg(2+) binding and, consequently, for the gamma-phosphate positioning of ATP.

The protein resides in the cytoplasm. It catalyses the reaction UDP-N-acetyl-alpha-D-muramoyl-L-alanyl-D-glutamate + L-lysine + ATP = UDP-N-acetyl-alpha-D-muramoyl-L-alanyl-gamma-D-glutamyl-L-lysine + ADP + phosphate + H(+). It functions in the pathway cell wall biogenesis; peptidoglycan biosynthesis. In terms of biological role, catalyzes the addition of L-lysine to the nucleotide precursor UDP-N-acetylmuramoyl-L-alanyl-D-glutamate (UMAG) in the biosynthesis of bacterial cell-wall peptidoglycan. In Streptococcus pyogenes serotype M6 (strain ATCC BAA-946 / MGAS10394), this protein is UDP-N-acetylmuramoyl-L-alanyl-D-glutamate--L-lysine ligase.